The primary structure comprises 137 residues: Protein Flattop homolog (137 aa).

The protein belongs to the Flattop family.

The protein localises to the cytoplasm. Its subcellular location is the cytoskeleton. The protein resides in the flagellum axoneme. Its function is as follows. Microtubule inner protein (MIP) part of the dynein-decorated doublet microtubules (DMTs) in cilia axoneme. Acts as a regulator of cilium basal body docking and positioning in mono- and multiciliated cells. Regulates basal body docking and cilia formation in multiciliated lung cells. Regulates kinocilium positioning and stereocilia bundle morphogenesis in the inner ear. In Chlamydomonas reinhardtii (Chlamydomonas smithii), this protein is Protein Flattop homolog.